A 200-amino-acid chain; its full sequence is NAD(P)H-quinone oxidoreductase subunit 6, chloroplastic (200 aa).

The next 5 helical transmembrane spans lie at 13–33 (VFFVFIELGLIFGSLGVVFLT), 35–55 (IVYSAFLLGLVFVCISFLYLL), 64–84 (AQILIYVGAVNILIVFAVMLI), 101–121 (TITLILCTSLFFLLISMILSI), and 156–176 (LLPFELLSIVLLVALIGAITI).

It belongs to the complex I subunit 6 family. As to quaternary structure, NDH is composed of at least 16 different subunits, 5 of which are encoded in the nucleus.

The protein localises to the plastid. It localises to the chloroplast thylakoid membrane. The catalysed reaction is a plastoquinone + NADH + (n+1) H(+)(in) = a plastoquinol + NAD(+) + n H(+)(out). The enzyme catalyses a plastoquinone + NADPH + (n+1) H(+)(in) = a plastoquinol + NADP(+) + n H(+)(out). In terms of biological role, NDH shuttles electrons from NAD(P)H:plastoquinone, via FMN and iron-sulfur (Fe-S) centers, to quinones in the photosynthetic chain and possibly in a chloroplast respiratory chain. The immediate electron acceptor for the enzyme in this species is believed to be plastoquinone. Couples the redox reaction to proton translocation, and thus conserves the redox energy in a proton gradient. The protein is NAD(P)H-quinone oxidoreductase subunit 6, chloroplastic (ndhG) of Anthoceros angustus (Hornwort).